We begin with the raw amino-acid sequence, 418 residues long: Adenylosuccinate synthetase (418 aa).

Residues 12–18 (GDEGKGK) and 40–42 (GHT) each bind GTP. Aspartate 13 acts as the Proton acceptor in catalysis. Mg(2+) is bound by residues aspartate 13 and glycine 40. Residues 13–16 (DEGK), 38–41 (NAGH), threonine 128, arginine 142, glutamine 221, threonine 236, and arginine 299 contribute to the IMP site. Histidine 41 (proton donor) is an active-site residue. Substrate is bound at residue 295–301 (ATTGRNR). GTP-binding positions include arginine 301, 327-329 (KAD), and 399-401 (SYG).

This sequence belongs to the adenylosuccinate synthetase family. As to quaternary structure, homodimer. Requires Mg(2+) as cofactor.

It localises to the cytoplasm. It catalyses the reaction IMP + L-aspartate + GTP = N(6)-(1,2-dicarboxyethyl)-AMP + GDP + phosphate + 2 H(+). Its pathway is purine metabolism; AMP biosynthesis via de novo pathway; AMP from IMP: step 1/2. In terms of biological role, plays an important role in the de novo pathway of purine nucleotide biosynthesis. Catalyzes the first committed step in the biosynthesis of AMP from IMP. This Finegoldia magna (strain ATCC 29328 / DSM 20472 / WAL 2508) (Peptostreptococcus magnus) protein is Adenylosuccinate synthetase.